Consider the following 123-residue polypeptide: Small ribosomal subunit protein uS13 (123 aa).

Residues 95–123 (GLPVRGQKTKTNARTRKGPKRAISGKKNK) are disordered.

This sequence belongs to the universal ribosomal protein uS13 family. Part of the 30S ribosomal subunit. Forms a loose heterodimer with protein S19. Forms two bridges to the 50S subunit in the 70S ribosome.

Its function is as follows. Located at the top of the head of the 30S subunit, it contacts several helices of the 16S rRNA. In the 70S ribosome it contacts the 23S rRNA (bridge B1a) and protein L5 of the 50S subunit (bridge B1b), connecting the 2 subunits; these bridges are implicated in subunit movement. Contacts the tRNAs in the A and P-sites. In Clostridium novyi (strain NT), this protein is Small ribosomal subunit protein uS13.